The sequence spans 150 residues: UPF0102 protein sll0189 (150 aa).

The protein belongs to the UPF0102 family.

The chain is UPF0102 protein sll0189 from Synechocystis sp. (strain ATCC 27184 / PCC 6803 / Kazusa).